Reading from the N-terminus, the 249-residue chain is Deoxyribose-phosphate aldolase (249 aa).

Aspartate 109 serves as the catalytic Proton donor/acceptor. Lysine 171 (schiff-base intermediate with acetaldehyde) is an active-site residue. Lysine 200 functions as the Proton donor/acceptor in the catalytic mechanism.

The protein belongs to the DeoC/FbaB aldolase family. DeoC type 1 subfamily.

Its subcellular location is the cytoplasm. It carries out the reaction 2-deoxy-D-ribose 5-phosphate = D-glyceraldehyde 3-phosphate + acetaldehyde. The protein operates within carbohydrate degradation; 2-deoxy-D-ribose 1-phosphate degradation; D-glyceraldehyde 3-phosphate and acetaldehyde from 2-deoxy-alpha-D-ribose 1-phosphate: step 2/2. Functionally, catalyzes a reversible aldol reaction between acetaldehyde and D-glyceraldehyde 3-phosphate to generate 2-deoxy-D-ribose 5-phosphate. This is Deoxyribose-phosphate aldolase from Klebsiella pneumoniae subsp. pneumoniae (strain ATCC 700721 / MGH 78578).